The sequence spans 195 residues: NADH-quinone oxidoreductase subunit B (195 aa).

Cys-74, Cys-75, Cys-139, and Cys-169 together coordinate [4Fe-4S] cluster.

It belongs to the complex I 20 kDa subunit family. NDH-1 is composed of 14 different subunits. Subunits NuoB, C, D, E, F, and G constitute the peripheral sector of the complex. It depends on [4Fe-4S] cluster as a cofactor.

It localises to the cell inner membrane. The enzyme catalyses a quinone + NADH + 5 H(+)(in) = a quinol + NAD(+) + 4 H(+)(out). Its function is as follows. NDH-1 shuttles electrons from NADH, via FMN and iron-sulfur (Fe-S) centers, to quinones in the respiratory chain. The immediate electron acceptor for the enzyme in this species is believed to be ubiquinone. Couples the redox reaction to proton translocation (for every two electrons transferred, four hydrogen ions are translocated across the cytoplasmic membrane), and thus conserves the redox energy in a proton gradient. The polypeptide is NADH-quinone oxidoreductase subunit B (Methylobacterium radiotolerans (strain ATCC 27329 / DSM 1819 / JCM 2831 / NBRC 15690 / NCIMB 10815 / 0-1)).